A 521-amino-acid polypeptide reads, in one-letter code: Bifunctional purine biosynthesis protein PurH (521 aa).

Residues 1–145 (MIKQALISVS…KNHRDVTVVV (145 aa)) enclose the MGS-like domain.

The protein belongs to the PurH family.

The enzyme catalyses (6R)-10-formyltetrahydrofolate + 5-amino-1-(5-phospho-beta-D-ribosyl)imidazole-4-carboxamide = 5-formamido-1-(5-phospho-D-ribosyl)imidazole-4-carboxamide + (6S)-5,6,7,8-tetrahydrofolate. The catalysed reaction is IMP + H2O = 5-formamido-1-(5-phospho-D-ribosyl)imidazole-4-carboxamide. Its pathway is purine metabolism; IMP biosynthesis via de novo pathway; 5-formamido-1-(5-phospho-D-ribosyl)imidazole-4-carboxamide from 5-amino-1-(5-phospho-D-ribosyl)imidazole-4-carboxamide (10-formyl THF route): step 1/1. The protein operates within purine metabolism; IMP biosynthesis via de novo pathway; IMP from 5-formamido-1-(5-phospho-D-ribosyl)imidazole-4-carboxamide: step 1/1. This chain is Bifunctional purine biosynthesis protein PurH, found in Burkholderia cenocepacia (strain ATCC BAA-245 / DSM 16553 / LMG 16656 / NCTC 13227 / J2315 / CF5610) (Burkholderia cepacia (strain J2315)).